The chain runs to 369 residues: Ubiquinone biosynthesis protein COQ4, mitochondrial (369 aa).

The transit peptide at 1 to 35 (MLTSQKVSRVLLHSSFLKTPVSTQSRSFVFTTIAT) directs the protein to the mitochondrion. Residues histidine 212, aspartate 213, histidine 216, and glutamate 228 each coordinate Zn(2+). The span at 329–360 (AAAAATVTQRQRQQQRATATAANATSASSANV) shows a compositional bias: low complexity. Residues 329–369 (AAAAATVTQRQRQQQRATATAANATSASSANVKPSNTAGAM) are disordered.

This sequence belongs to the COQ4 family. In terms of assembly, component of a multi-subunit COQ enzyme complex, composed of at least COQ3, COQ4, COQ5, COQ6, COQ7 and COQ9. Requires Zn(2+) as cofactor.

Its subcellular location is the mitochondrion inner membrane. The enzyme catalyses a 4-hydroxy-3-methoxy-5-(all-trans-polyprenyl)benzoate + H(+) = a 2-methoxy-6-(all-trans-polyprenyl)phenol + CO2. The protein operates within cofactor biosynthesis; ubiquinone biosynthesis. Functionally, lyase that catalyzes the C1-decarboxylation of 4-hydroxy-3-methoxy-5-(all-trans-polyprenyl)benzoic acid into 2-methoxy-6-(all-trans-polyprenyl)phenol during ubiquinone biosynthesis. The sequence is that of Ubiquinone biosynthesis protein COQ4, mitochondrial from Lodderomyces elongisporus (strain ATCC 11503 / CBS 2605 / JCM 1781 / NBRC 1676 / NRRL YB-4239) (Yeast).